Reading from the N-terminus, the 23-residue chain is Caerin-4.2 (23 aa).

Expressed by the skin parotoid and/or rostral glands.

The protein resides in the secreted. Its function is as follows. Antibacterial peptide, that adopts an alpha helical conformation which can disrupt bacterial membranes. Each caerin displays a different antimicrobial specificity. This is Caerin-4.2 from Ranoidea caerulea (Green tree frog).